We begin with the raw amino-acid sequence, 353 residues long: Protein RecA (353 aa).

Residue 67 to 74 (GPESSGKT) coordinates ATP.

This sequence belongs to the RecA family.

Its subcellular location is the cytoplasm. In terms of biological role, can catalyze the hydrolysis of ATP in the presence of single-stranded DNA, the ATP-dependent uptake of single-stranded DNA by duplex DNA, and the ATP-dependent hybridization of homologous single-stranded DNAs. It interacts with LexA causing its activation and leading to its autocatalytic cleavage. This is Protein RecA from Salmonella paratyphi A (strain ATCC 9150 / SARB42).